The following is a 704-amino-acid chain: Elongation factor G (704 aa).

The region spanning 8–291 (DKVRNIGIMA…AVVDYLASPL (284 aa)) is the tr-type G domain. Residues 17–24 (AHIDAGKT), 90–94 (DTPGH), and 144–147 (NKMD) each bind GTP.

The protein belongs to the TRAFAC class translation factor GTPase superfamily. Classic translation factor GTPase family. EF-G/EF-2 subfamily.

The protein localises to the cytoplasm. Catalyzes the GTP-dependent ribosomal translocation step during translation elongation. During this step, the ribosome changes from the pre-translocational (PRE) to the post-translocational (POST) state as the newly formed A-site-bound peptidyl-tRNA and P-site-bound deacylated tRNA move to the P and E sites, respectively. Catalyzes the coordinated movement of the two tRNA molecules, the mRNA and conformational changes in the ribosome. The sequence is that of Elongation factor G from Chlorobium luteolum (strain DSM 273 / BCRC 81028 / 2530) (Pelodictyon luteolum).